A 283-amino-acid polypeptide reads, in one-letter code: Zinc finger protein 691 (283 aa).

The span at Met1 to Gln41 shows a compositional bias: basic and acidic residues. Positions Met1–Gly68 are disordered. The residue at position 43 (Ser43) is a Phosphoserine. A Glycyl lysine isopeptide (Lys-Gly) (interchain with G-Cter in SUMO2) cross-link involves residue Lys81. C2H2-type zinc fingers lie at residues Phe83–His105, Tyr111–His133, Tyr139–His161, Tyr167–His189, Tyr195–His217, Tyr223–His245, and Tyr251–His273.

Belongs to the krueppel C2H2-type zinc-finger protein family.

The protein localises to the nucleus. Functionally, may be involved in transcriptional regulation. This Mus musculus (Mouse) protein is Zinc finger protein 691 (Znf691).